A 108-amino-acid chain; its full sequence is uncharacterized protein (108 aa).

It belongs to the UPF0440 family.

This is an uncharacterized protein from Thermococcus kodakarensis (strain ATCC BAA-918 / JCM 12380 / KOD1) (Pyrococcus kodakaraensis (strain KOD1)).